The sequence spans 304 residues: uncharacterized protein (304 aa).

Belongs to the mimivirus L137 family.

This is an uncharacterized protein from Acanthamoeba polyphaga mimivirus (APMV).